Here is a 180-residue protein sequence, read N- to C-terminus: ATP-dependent protease subunit HslV (180 aa).

T5 is an active-site residue. Residues G161, C164, and T167 each contribute to the Na(+) site.

The protein belongs to the peptidase T1B family. HslV subfamily. In terms of assembly, a double ring-shaped homohexamer of HslV is capped on each side by a ring-shaped HslU homohexamer. The assembly of the HslU/HslV complex is dependent on binding of ATP.

It localises to the cytoplasm. The catalysed reaction is ATP-dependent cleavage of peptide bonds with broad specificity.. Its activity is regulated as follows. Allosterically activated by HslU binding. In terms of biological role, protease subunit of a proteasome-like degradation complex believed to be a general protein degrading machinery. The polypeptide is ATP-dependent protease subunit HslV (Campylobacter jejuni subsp. jejuni serotype O:2 (strain ATCC 700819 / NCTC 11168)).